Consider the following 1381-residue polypeptide: Hepatocyte growth factor receptor (1381 aa).

Residues 1–24 (MKAPAVLAPGILMLLFTLVQRSNG) form the signal peptide. The Extracellular portion of the chain corresponds to 25–932 (ECKEALAKSE…VIVQPDQNFT (908 aa)). Positions 27–515 (KEALAKSEMN…TGKKITKIPL (489 aa)) constitute a Sema domain. A glycan (N-linked (GlcNAc...) asparagine) is linked at Asn45. 4 cysteine pairs are disulfide-bonded: Cys95-Cys101, Cys98-Cys160, Cys133-Cys141, and Cys172-Cys175. Asn106 carries an N-linked (GlcNAc...) asparagine glycan. The N-linked (GlcNAc...) asparagine glycan is linked to Asn149. N-linked (GlcNAc...) asparagine glycosylation is present at Asn202. 2 disulfides stabilise this stretch: Cys298-Cys363 and Cys385-Cys397. 2 N-linked (GlcNAc...) asparagine glycosylation sites follow: Asn399 and Asn405. 4 disulfides stabilise this stretch: Cys520–Cys538, Cys526–Cys561, Cys529–Cys545, and Cys541–Cys551. IPT/TIG domains are found at residues 563–655 (PAIY…FSYV), 657–739 (PIIT…FSYR), and 742–836 (PIVY…LIYV). Residue Thr582 is glycosylated (O-linked (Man) threonine). Asn607 and Asn635 each carry an N-linked (GlcNAc...) asparagine glycan. O-linked (Man) threonine glycosylation is found at Thr676 and Thr761. 3 N-linked (GlcNAc...) asparagine glycosylation sites follow: Asn785, Asn879, and Asn930. Residues 933–955 (GLIAGVVSISIALLLLLGLFLWL) form a helical membrane-spanning segment. Topologically, residues 956–1381 (KKRKQIKDLG…EDNADDEVDT (426 aa)) are cytoplasmic. Residue Ser966 is modified to Phosphoserine. Thr977 is modified (phosphothreonine). 3 positions are modified to phosphoserine: Ser990, Ser997, and Ser1000. Tyr1003 carries the post-translational modification Phosphotyrosine. One can recognise a Protein kinase domain in the interval 1078–1345 (VHFNEVIGRG…RISAIFSTFI (268 aa)). Residues 1084–1092 (IGRGHFGCV) and Lys1110 each bind ATP. Asp1204 acts as the Proton acceptor in catalysis. The interval 1212-1381 (LDEKFTVKVA…EDNADDEVDT (170 aa)) is interaction with RANBP9. The residue at position 1230 (Tyr1230) is a Phosphotyrosine. A phosphotyrosine; by autocatalysis mark is found at Tyr1234 and Tyr1235. Residue Thr1289 is modified to Phosphothreonine. Positions 1320-1359 (WHPKAEMRPSFSELVSRISAIFSTFIGEHYVHVNATYVNV) are interaction with MUC20. Phosphotyrosine; by autocatalysis is present on residues Tyr1349 and Tyr1356. The residue at position 1365 (Tyr1365) is a Phosphotyrosine.

Belongs to the protein kinase superfamily. Tyr protein kinase family. In terms of assembly, heterodimer made of an alpha chain (50 kDa) and a beta chain (145 kDa) which are disulfide linked. Binds PLXNB1. Interacts when phosphorylated with downstream effectors including STAT3, PIK3R1, SRC, PCLG1, GRB2 and GAB1. Interacts with SPSB1, SPSB2 and SPSB4. Interacts with INPP5D/SHIP1. When phosphorylated at Tyr-1356, interacts with INPPL1/SHIP2. Interacts with RANBP9 and RANBP10, as well as SPSB1, SPSB2, SPSB3 and SPSB4. SPSB1 binding occurs in the presence and in the absence of HGF, however HGF treatment has a positive effect on this interaction. Interacts with MUC20; prevents interaction with GRB2 and suppresses hepatocyte growth factor-induced cell proliferation. Interacts with GRB10. Interacts with PTPN1 and PTPN2. Interacts with HSP90AA1 and HSP90AB1; the interaction suppresses MET kinase activity. Interacts with tensin TNS3. Interacts (when phosphorylated) with tensin TNS4 (via SH2 domain); the interaction increases MET protein stability by inhibiting MET endocytosis and subsequent lysosomal degradation. (Microbial infection) Immunoprecipitates with L.monocytogenes InlB. InlB probably dimerizes upon binding to MET, which encourages subsequent dimerization of MET. In terms of processing, autophosphorylated in response to ligand binding on Tyr-1234 and Tyr-1235 in the kinase domain leading to further phosphorylation of Tyr-1349 and Tyr-1356 in the C-terminal multifunctional docking site. Dephosphorylated by PTPRJ at Tyr-1349 and Tyr-1365. Dephosphorylated by PTPN1 and PTPN2. Ubiquitinated. Ubiquitination by CBL regulates the receptor stability and activity through proteasomal degradation. Post-translationally, O-mannosylation of IPT/TIG domains by TMEM260 is required for protein maturation. O-mannosylated residues are composed of single mannose glycans that are not elongated or modified. In terms of processing, (Microbial infection) Tyrosine phosphorylation is stimulated by L.monocytogenes InlB.

The protein localises to the membrane. The catalysed reaction is L-tyrosyl-[protein] + ATP = O-phospho-L-tyrosyl-[protein] + ADP + H(+). With respect to regulation, in its inactive state, the C-terminal tail interacts with the catalytic domain and inhibits the kinase activity. Upon ligand binding, the C-terminal tail is displaced and becomes phosphorylated, thus increasing the kinase activity. In terms of biological role, receptor tyrosine kinase that transduces signals from the extracellular matrix into the cytoplasm by binding to hepatocyte growth factor/HGF ligand. Regulates many physiological processes including proliferation, scattering, morphogenesis and survival. Ligand binding at the cell surface induces autophosphorylation of MET on its intracellular domain that provides docking sites for downstream signaling molecules. Following activation by ligand, interacts with the PI3-kinase subunit PIK3R1, PLCG1, SRC, GRB2, STAT3 or the adapter GAB1. Recruitment of these downstream effectors by MET leads to the activation of several signaling cascades including the RAS-ERK, PI3 kinase-AKT, or PLCgamma-PKC. The RAS-ERK activation is associated with the morphogenetic effects while PI3K/AKT coordinates prosurvival effects. During embryonic development, MET signaling plays a role in gastrulation, development and migration of muscles and neuronal precursors, angiogenesis and kidney formation. In adults, participates in wound healing as well as organ regeneration and tissue remodeling. Also promotes differentiation and proliferation of hematopoietic cells. (Microbial infection) Acts as a receptor for Listeria monocytogenes internalin InlB, mediating entry of the pathogen into cells. In Chlorocebus aethiops (Green monkey), this protein is Hepatocyte growth factor receptor (MET).